The chain runs to 247 residues: Phosphonates import ATP-binding protein PhnC (247 aa).

Residues 5–246 (IEVKNLVKNY…EDDIRKVYQT (242 aa)) form the ABC transporter domain. 37–44 (GESGAGKS) contributes to the ATP binding site.

It belongs to the ABC transporter superfamily. Phosphonates importer (TC 3.A.1.9.1) family. In terms of assembly, the complex is composed of two ATP-binding proteins (PhnC), two transmembrane proteins (PhnE) and a solute-binding protein (PhnD).

It is found in the cell inner membrane. The catalysed reaction is phosphonate(out) + ATP + H2O = phosphonate(in) + ADP + phosphate + H(+). Its function is as follows. Part of the ABC transporter complex PhnCDE involved in phosphonates import. Responsible for energy coupling to the transport system. This is Phosphonates import ATP-binding protein PhnC from Fusobacterium nucleatum subsp. nucleatum (strain ATCC 25586 / DSM 15643 / BCRC 10681 / CIP 101130 / JCM 8532 / KCTC 2640 / LMG 13131 / VPI 4355).